Reading from the N-terminus, the 267-residue chain is Tryptophan synthase alpha chain (267 aa).

Active-site proton acceptor residues include Glu-51 and Asp-62.

Belongs to the TrpA family. Tetramer of two alpha and two beta chains.

The enzyme catalyses (1S,2R)-1-C-(indol-3-yl)glycerol 3-phosphate + L-serine = D-glyceraldehyde 3-phosphate + L-tryptophan + H2O. It functions in the pathway amino-acid biosynthesis; L-tryptophan biosynthesis; L-tryptophan from chorismate: step 5/5. In terms of biological role, the alpha subunit is responsible for the aldol cleavage of indoleglycerol phosphate to indole and glyceraldehyde 3-phosphate. This chain is Tryptophan synthase alpha chain, found in Prochlorococcus marinus (strain SARG / CCMP1375 / SS120).